The sequence spans 514 residues: Probable transposase for insertion sequence element IS1353 (514 aa).

Residues 172–216 (KGDTSLEQRHEALLRELAELESQNQRLRMENAILEKASELIKKDM) adopt a coiled-coil conformation. Residues 346–510 (HASAPNTKWL…SPIEYRHAVG (165 aa)) enclose the Integrase catalytic domain. Mg(2+) is bound by residues aspartate 357 and aspartate 417.

This sequence belongs to the transposase 8 family.

Functionally, probably involved in the transposition of insertion sequence IS1353. The sequence is that of Probable transposase for insertion sequence element IS1353 from Shigella flexneri.